Reading from the N-terminus, the 141-residue chain is Nucleoside diphosphate kinase (141 aa).

6 residues coordinate ATP: Lys11, Phe59, Arg87, Thr93, Arg104, and Asn114. Catalysis depends on His117, which acts as the Pros-phosphohistidine intermediate.

It belongs to the NDK family. In terms of assembly, homotetramer. It depends on Mg(2+) as a cofactor.

It localises to the cytoplasm. The catalysed reaction is a 2'-deoxyribonucleoside 5'-diphosphate + ATP = a 2'-deoxyribonucleoside 5'-triphosphate + ADP. It catalyses the reaction a ribonucleoside 5'-diphosphate + ATP = a ribonucleoside 5'-triphosphate + ADP. In terms of biological role, major role in the synthesis of nucleoside triphosphates other than ATP. The ATP gamma phosphate is transferred to the NDP beta phosphate via a ping-pong mechanism, using a phosphorylated active-site intermediate. This Actinobacillus succinogenes (strain ATCC 55618 / DSM 22257 / CCUG 43843 / 130Z) protein is Nucleoside diphosphate kinase.